Here is a 265-residue protein sequence, read N- to C-terminus: Tryptophan synthase alpha chain (265 aa).

Residues Glu49 and Asp60 each act as proton acceptor in the active site.

The protein belongs to the TrpA family. In terms of assembly, tetramer of two alpha and two beta chains.

The enzyme catalyses (1S,2R)-1-C-(indol-3-yl)glycerol 3-phosphate + L-serine = D-glyceraldehyde 3-phosphate + L-tryptophan + H2O. The protein operates within amino-acid biosynthesis; L-tryptophan biosynthesis; L-tryptophan from chorismate: step 5/5. In terms of biological role, the alpha subunit is responsible for the aldol cleavage of indoleglycerol phosphate to indole and glyceraldehyde 3-phosphate. The chain is Tryptophan synthase alpha chain from Polynucleobacter asymbioticus (strain DSM 18221 / CIP 109841 / QLW-P1DMWA-1) (Polynucleobacter necessarius subsp. asymbioticus).